The chain runs to 306 residues: Small ribosomal subunit protein uS2 (306 aa).

The segment covering 229 to 238 (GEESAAEERP) has biased composition (basic and acidic residues). Residues 229–306 (GEESAAEERP…VGEGDESEER (78 aa)) form a disordered region. The span at 261 to 287 (QPGEPEAEAFEEAAGEPEDSTEEEAAE) shows a compositional bias: acidic residues.

Belongs to the universal ribosomal protein uS2 family.

This chain is Small ribosomal subunit protein uS2, found in Rubrobacter xylanophilus (strain DSM 9941 / JCM 11954 / NBRC 16129 / PRD-1).